Reading from the N-terminus, the 313-residue chain is Adhesin MafA 1/2 (313 aa).

The signal sequence occupies residues 1-14 (MKTLLLLIPLVLTA). A lipid anchor (N-palmitoyl cysteine) is attached at cysteine 15. Cysteine 15 carries the S-diacylglycerol cysteine lipid modification. A compositionally biased stretch (polar residues) spans 282 to 298 (GDTTAQNRPDFKQNNGK). A disordered region spans residues 282-313 (GDTTAQNRPDFKQNNGKNPDVGNEVIRRRKGG).

Belongs to the MafA family.

The protein localises to the cell outer membrane. In Neisseria meningitidis serogroup C (strain 053442), this protein is Adhesin MafA 1/2 (mafA1).